A 325-amino-acid polypeptide reads, in one-letter code: MAPLTLSVDVKSSSATSHDVSKRVMQSSQLKINKGFFASVNTQEDKPFDFFRTLFEGFIAGGTAGVVVETALYPIDTIKTRLQAARGGGKIVLKGLYSGLAGNIAGVLPASALFVGVYEPTKQKLLKTFPDHLSAVAHLTAGAIGGLAASLIRVPTEVVKQRMQTGQFTSAPSAVRMIASKEGFRGLYAGYRSFLLRDLPFDAIQFCIYEQLCLGYKKAARRELSDPENALIGAFAGALTGAVTTPLDVIKTRLMVQGSAKQYQGIVDCVQTIVREEGAPALLKGIGPRVLWIGIGGSIFFGVLESTKRTLAQRRPNTVKETKEE.

A chloroplast and mitochondrion-targeting transit peptide spans 1 to 38 (MAPLTLSVDVKSSSATSHDVSKRVMQSSQLKINKGFFA). Solcar repeat units follow at residues 52–124 (RTLF…TKQK), 133–215 (LSAV…LCLG), and 228–310 (ENAL…TKRT). The next 5 membrane-spanning stretches (helical) occupy residues 55–75 (FEGF…LYPI), 97–117 (YSGL…FVGV), 132–152 (HLSA…ASLI), 230–250 (ALIG…LDVI), and 285–305 (GIGP…GVLE).

It belongs to the mitochondrial carrier (TC 2.A.29) family. Expressed in seedlings, cotyledons, leaves and flowers. Lower levels of expression in stems and roots. Not detected in senescent leaves, petals and pollen grains.

It localises to the mitochondrion membrane. Its subcellular location is the plastid. It is found in the chloroplast membrane. Its activity is regulated as follows. Inhibited strongly by tannic acid, bromocresol purple, mercuric chloride, mersalyl, p-hydroxymercuribenzoate, S-adenosylhomocysteine, S-adenosylcysteine and adenosylornithine, and to a lesser extent by N-ethylmaleimide, bathophenanthroline and pyridoxal-5'-P. In terms of biological role, transporter involved in exchange reactions through membranes. Has a low uniporter activity. Specifically mediates the transport of S-adenosylmethionine (SAM) and its closest analogs. Probably involved in the uptake of SAM in exchange for S-adenosylhomocysteine (SAHC), which is produced from SAM in the mitochondrial matrix and plastidial stroma by methyltransferase activities. In Arabidopsis thaliana (Mouse-ear cress), this protein is S-adenosylmethionine carrier 1, chloroplastic/mitochondrial (SAMC1).